Reading from the N-terminus, the 315-residue chain is MRAAAGGARAAVLALLLGALHGAPARGEEYDYYGWQTEPLHGRSYSKPPQCLDIPADLPLCHTVGYKRMRLPNLLEHESLAEVKQQASSWLPLLAKRCHSDTQVFLCSLFAPVCLDRPIYPCRSLCEAVRAGCAPLMEAYGFPWPEMLHCHKFPLDNDLCIAVQFGHLPATAPPVTKICAQCEMEHSADGLMEQMCSSDFVVKMRIKEIKIENGDRKLIGAQKKKKLLKSGPLKRKDTKRLVLHMKNSAGCPCPQLDSLAGSFLVMGRKVDGQLLLMAVYRWDKKNKEMKFAVKFMFSYPCSLYYPFFYGAAEPH.

The first 27 residues, 1-27 (MRAAAGGARAAVLALLLGALHGAPARG), serve as a signal peptide directing secretion. The FZ domain occupies 46–163 (SKPPQCLDIP…PLDNDLCIAV (118 aa)). 8 cysteine pairs are disulfide-bonded: Cys-51–Cys-114, Cys-61–Cys-107, Cys-98–Cys-133, Cys-122–Cys-160, Cys-126–Cys-150, Cys-179–Cys-251, Cys-182–Cys-253, and Cys-196–Cys-301. Residues 179-301 (CAQCEMEHSA…AVKFMFSYPC (123 aa)) enclose the NTR domain.

This sequence belongs to the secreted frizzled-related protein (sFRP) family. As to expression, strongly expressed in the retinal pigment epithelium (RPE). Weak expression in retina, brain, heart, liver, kidney, testis and muscle.

The protein resides in the secreted. Soluble frizzled-related proteins (sFRPS) function as modulators of Wnt signaling through direct interaction with Wnts. They have a role in regulating cell growth and differentiation in specific cell types. SFRP5 may be involved in determining the polarity of photoreceptor, and perhaps other, cells in the retina. Inhibits Wnt8 signaling, in vitro. The chain is Secreted frizzled-related protein 5 (SFRP5) from Bos taurus (Bovine).